Reading from the N-terminus, the 122-residue chain is Large ribosomal subunit protein uL14 (122 aa).

It belongs to the universal ribosomal protein uL14 family. As to quaternary structure, part of the 50S ribosomal subunit. Forms a cluster with proteins L3 and L19. In the 70S ribosome, L14 and L19 interact and together make contacts with the 16S rRNA in bridges B5 and B8.

Functionally, binds to 23S rRNA. Forms part of two intersubunit bridges in the 70S ribosome. The chain is Large ribosomal subunit protein uL14 from Rubrobacter xylanophilus (strain DSM 9941 / JCM 11954 / NBRC 16129 / PRD-1).